The chain runs to 385 residues: 1-deoxy-D-xylulose 5-phosphate reductoisomerase (385 aa).

NADPH-binding residues include Thr10, Gly11, Ser12, Ile13, Lys37, and Asn124. Position 125 (Lys125) interacts with 1-deoxy-D-xylulose 5-phosphate. Glu126 contributes to the NADPH binding site. Asp150 serves as a coordination point for Mn(2+). 1-deoxy-D-xylulose 5-phosphate is bound by residues Ser151, Glu152, Ser176, and His199. Mn(2+) is bound at residue Glu152. NADPH is bound at residue Gly205. The 1-deoxy-D-xylulose 5-phosphate site is built by Ser212, Asn217, Lys218, and Glu221. Glu221 provides a ligand contact to Mn(2+).

This sequence belongs to the DXR family. Mg(2+) serves as cofactor. The cofactor is Mn(2+).

It catalyses the reaction 2-C-methyl-D-erythritol 4-phosphate + NADP(+) = 1-deoxy-D-xylulose 5-phosphate + NADPH + H(+). Its pathway is isoprenoid biosynthesis; isopentenyl diphosphate biosynthesis via DXP pathway; isopentenyl diphosphate from 1-deoxy-D-xylulose 5-phosphate: step 1/6. Its function is as follows. Catalyzes the NADPH-dependent rearrangement and reduction of 1-deoxy-D-xylulose-5-phosphate (DXP) to 2-C-methyl-D-erythritol 4-phosphate (MEP). The protein is 1-deoxy-D-xylulose 5-phosphate reductoisomerase of Clostridium botulinum (strain Okra / Type B1).